Consider the following 47-residue polypeptide: Delta-actitoxin-Ael1a (47 aa).

Cystine bridges form between C4-C44, C6-C34, and C27-C45.

Belongs to the sea anemone sodium channel inhibitory toxin family. Type I subfamily. In terms of tissue distribution, expressed in ectodermal glands. Not expressed in nematocytes.

It localises to the secreted. Its function is as follows. Binds specifically to voltage-gated sodium channels (Nav), thereby delaying their inactivation during signal transduction. It strongly stimulates mammalian cardiac muscle contraction. Paralyzes the shore crab (C.maenas) by tetanic contractions after intramuscular injection. This Anthopleura elegantissima (Green aggregating anemone) protein is Delta-actitoxin-Ael1a.